Consider the following 373-residue polypeptide: Flagellar P-ring protein (373 aa).

The N-terminal stretch at 1 to 26 (MKLFFRFLTLVAVLAMSLADVAPAWA) is a signal peptide.

Belongs to the FlgI family. As to quaternary structure, the basal body constitutes a major portion of the flagellar organelle and consists of four rings (L,P,S, and M) mounted on a central rod.

It is found in the periplasm. The protein localises to the bacterial flagellum basal body. In terms of biological role, assembles around the rod to form the L-ring and probably protects the motor/basal body from shearing forces during rotation. The polypeptide is Flagellar P-ring protein (Rhizobium leguminosarum bv. trifolii (strain WSM2304)).